The chain runs to 107 residues: Nucleoid-associated protein A1C_06705 (107 aa).

The protein belongs to the YbaB/EbfC family. Homodimer.

It localises to the cytoplasm. The protein localises to the nucleoid. In terms of biological role, binds to DNA and alters its conformation. May be involved in regulation of gene expression, nucleoid organization and DNA protection. In Rickettsia akari (strain Hartford), this protein is Nucleoid-associated protein A1C_06705.